A 545-amino-acid chain; its full sequence is Membrane protein insertase YidC (545 aa).

Residues 6–26 (FVLFVFFIFLSFLLWEQWQID) traverse the membrane as a helical segment. A disordered region spans residues 32–69 (QAVAQTDGASRPAGDLPQRPSDDESDVTVHTEAPTQEG). The next 4 membrane-spanning stretches (helical) occupy residues 354 to 374 (FFNNWGWAIIFVTLVIKALFF), 425 to 445 (GGCLPILVQIPVFISLYWVLV), 462 to 482 (LSSKDPYFVLPLIMGVSMFIQ), and 500 to 520 (FFPLVFTVFFLFFPSGLVLYW).

This sequence belongs to the OXA1/ALB3/YidC family. Type 1 subfamily. As to quaternary structure, interacts with the Sec translocase complex via SecD. Specifically interacts with transmembrane segments of nascent integral membrane proteins during membrane integration.

The protein resides in the cell inner membrane. Functionally, required for the insertion and/or proper folding and/or complex formation of integral membrane proteins into the membrane. Involved in integration of membrane proteins that insert both dependently and independently of the Sec translocase complex, as well as at least some lipoproteins. Aids folding of multispanning membrane proteins. The polypeptide is Membrane protein insertase YidC (Methylococcus capsulatus (strain ATCC 33009 / NCIMB 11132 / Bath)).